Reading from the N-terminus, the 236-residue chain is Pyridoxine 5'-phosphate synthase (236 aa).

A 3-amino-2-oxopropyl phosphate-binding site is contributed by Asn-6. 8–9 (DH) is a binding site for 1-deoxy-D-xylulose 5-phosphate. Arg-17 provides a ligand contact to 3-amino-2-oxopropyl phosphate. His-42 functions as the Proton acceptor in the catalytic mechanism. Residues Arg-44 and His-49 each coordinate 1-deoxy-D-xylulose 5-phosphate. Catalysis depends on Glu-69, which acts as the Proton acceptor. Residue Thr-99 coordinates 1-deoxy-D-xylulose 5-phosphate. Catalysis depends on His-192, which acts as the Proton donor. 3-amino-2-oxopropyl phosphate contacts are provided by residues Gly-193 and 216–217 (GH).

It belongs to the PNP synthase family. Homooctamer; tetramer of dimers.

The protein localises to the cytoplasm. The enzyme catalyses 3-amino-2-oxopropyl phosphate + 1-deoxy-D-xylulose 5-phosphate = pyridoxine 5'-phosphate + phosphate + 2 H2O + H(+). The protein operates within cofactor biosynthesis; pyridoxine 5'-phosphate biosynthesis; pyridoxine 5'-phosphate from D-erythrose 4-phosphate: step 5/5. In terms of biological role, catalyzes the complicated ring closure reaction between the two acyclic compounds 1-deoxy-D-xylulose-5-phosphate (DXP) and 3-amino-2-oxopropyl phosphate (1-amino-acetone-3-phosphate or AAP) to form pyridoxine 5'-phosphate (PNP) and inorganic phosphate. The sequence is that of Pyridoxine 5'-phosphate synthase from Aquifex pyrophilus.